The chain runs to 163 residues: Transcriptional repressor NrdR (163 aa).

A zinc finger spans residues 3–34 (CVQCGHLEDKVIDSRMSKDGTTIRRRRVCLRC). The region spanning 49-139 (LRVVKRDNLR…VYRQFSNVEE (91 aa)) is the ATP-cone domain.

This sequence belongs to the NrdR family. The cofactor is Zn(2+).

Its function is as follows. Negatively regulates transcription of bacterial ribonucleotide reductase nrd genes and operons by binding to NrdR-boxes. The chain is Transcriptional repressor NrdR from Akkermansia muciniphila (strain ATCC BAA-835 / DSM 22959 / JCM 33894 / BCRC 81048 / CCUG 64013 / CIP 107961 / Muc).